Reading from the N-terminus, the 224-residue chain is Small ribosomal subunit protein uS3 (224 aa).

The KH type-2 domain maps to 38–106 (LREYVKEKLG…EVYLNVVEVR (69 aa)).

This sequence belongs to the universal ribosomal protein uS3 family. Part of the 30S ribosomal subunit. Forms a tight complex with proteins S10 and S14.

Its function is as follows. Binds the lower part of the 30S subunit head. Binds mRNA in the 70S ribosome, positioning it for translation. The protein is Small ribosomal subunit protein uS3 of Anaeromyxobacter sp. (strain Fw109-5).